A 279-amino-acid chain; its full sequence is Phosphatidylglycerol--prolipoprotein diacylglyceryl transferase (279 aa).

Transmembrane regions (helical) follow at residues W22–L42, L52–V72, and I89–I109. Position 137 (R137) interacts with a 1,2-diacyl-sn-glycero-3-phospho-(1'-sn-glycerol). Transmembrane regions (helical) follow at residues L203–A223 and I235–Y255.

The protein belongs to the Lgt family.

It localises to the cell membrane. The enzyme catalyses L-cysteinyl-[prolipoprotein] + a 1,2-diacyl-sn-glycero-3-phospho-(1'-sn-glycerol) = an S-1,2-diacyl-sn-glyceryl-L-cysteinyl-[prolipoprotein] + sn-glycerol 1-phosphate + H(+). It functions in the pathway protein modification; lipoprotein biosynthesis (diacylglyceryl transfer). Catalyzes the transfer of the diacylglyceryl group from phosphatidylglycerol to the sulfhydryl group of the N-terminal cysteine of a prolipoprotein, the first step in the formation of mature lipoproteins. This chain is Phosphatidylglycerol--prolipoprotein diacylglyceryl transferase, found in Staphylococcus epidermidis (strain ATCC 12228 / FDA PCI 1200).